The following is a 456-amino-acid chain: Peptide chain release factor PrfB1, chloroplastic (456 aa).

Residues 1 to 58 constitute a chloroplast transit peptide; that stretch reads MSMELTVLGPLAGRSFAIAGKPKLLLLRPTNLPLLRLSLPLSLPNFSSSSRFNSPIVF.

The protein belongs to the prokaryotic/mitochondrial release factor family. As to expression, expressed in leaves, stems and flowers.

Its subcellular location is the plastid. The protein resides in the chloroplast stroma. Directs the termination of translation in response to the peptide chain termination codon UGA. Required for the proper translation, stability and normal processing of UGA-containing polycistronic transcripts in chloroplasts. The sequence is that of Peptide chain release factor PrfB1, chloroplastic from Arabidopsis thaliana (Mouse-ear cress).